The primary structure comprises 52 residues: uncharacterized protein (52 aa).

The chain crosses the membrane as a helical span at residues 21 to 40 (VAMNSYVELLFLSVPLIHIF).

Its subcellular location is the cell membrane. This is an uncharacterized protein from Bacillus subtilis (strain 168).